Consider the following 223-residue polypeptide: DNA mismatch repair protein MutH (223 aa).

It belongs to the MutH family.

The protein resides in the cytoplasm. Sequence-specific endonuclease that cleaves unmethylated GATC sequences. It is involved in DNA mismatch repair. This is DNA mismatch repair protein MutH from Shewanella baltica (strain OS195).